Reading from the N-terminus, the 612-residue chain is Kelch repeat and BTB domain-containing protein 3 (612 aa).

One can recognise a BTB domain in the interval 52–119; sequence YDFKIIMKDE…AYTGKTKITD (68 aa). Residues 150 to 250 form the BACK domain; that stretch reads NLVNCLQLLS…VRLHQLSEET (101 aa). Kelch repeat units follow at residues 291 to 337, 339 to 390, 400 to 450, 452 to 502, and 548 to 595; these read STTE…GSSL, SYGE…STMK, MALD…PEAS, CQNV…ATLI, and GIED…FYCQ.

This is Kelch repeat and BTB domain-containing protein 3 from Pongo abelii (Sumatran orangutan).